Consider the following 391-residue polypeptide: NAD(P)H-quinone oxidoreductase subunit H, chloroplastic (391 aa).

It belongs to the complex I 49 kDa subunit family. In terms of assembly, NDH is composed of at least 16 different subunits, 5 of which are encoded in the nucleus.

The protein resides in the plastid. The protein localises to the chloroplast thylakoid membrane. It carries out the reaction a plastoquinone + NADH + (n+1) H(+)(in) = a plastoquinol + NAD(+) + n H(+)(out). The catalysed reaction is a plastoquinone + NADPH + (n+1) H(+)(in) = a plastoquinol + NADP(+) + n H(+)(out). Functionally, NDH shuttles electrons from NAD(P)H:plastoquinone, via FMN and iron-sulfur (Fe-S) centers, to quinones in the photosynthetic chain and possibly in a chloroplast respiratory chain. The immediate electron acceptor for the enzyme in this species is believed to be plastoquinone. Couples the redox reaction to proton translocation, and thus conserves the redox energy in a proton gradient. The chain is NAD(P)H-quinone oxidoreductase subunit H, chloroplastic from Mesostigma viride (Green alga).